A 390-amino-acid chain; its full sequence is GTPase Obg (390 aa).

Residues 1-159 (MKFVDEATIL…RDLQLELMLL (159 aa)) form the Obg domain. Residues 127-146 (NTRFKSSVNRTPRQKTMGTP) are disordered. The segment covering 129-143 (RFKSSVNRTPRQKTM) has biased composition (polar residues). The region spanning 160–333 (ADVGMLGMPN…LCWDVMHFII (174 aa)) is the OBG-type G domain. GTP contacts are provided by residues 166–173 (GMPNAGKS), 191–195 (FTTLV), 213–216 (DIPG), 283–286 (NKID), and 314–316 (SAA). Mg(2+)-binding residues include Ser173 and Thr193. The segment covering 364–384 (MEAEAEEEWDDDWDEDDDEGV) has biased composition (acidic residues). Residues 364 to 390 (MEAEAEEEWDDDWDEDDDEGVEIVYQR) are disordered.

It belongs to the TRAFAC class OBG-HflX-like GTPase superfamily. OBG GTPase family. In terms of assembly, monomer. It depends on Mg(2+) as a cofactor.

The protein resides in the cytoplasm. An essential GTPase which binds GTP, GDP and possibly (p)ppGpp with moderate affinity, with high nucleotide exchange rates and a fairly low GTP hydrolysis rate. Plays a role in control of the cell cycle, stress response, ribosome biogenesis and in those bacteria that undergo differentiation, in morphogenesis control. The chain is GTPase Obg from Cronobacter sakazakii (strain ATCC BAA-894) (Enterobacter sakazakii).